A 371-amino-acid polypeptide reads, in one-letter code: Cytochrome b (371 aa).

The next 4 membrane-spanning stretches (helical) occupy residues 25–45 (FGSMLLTCLALQVLTGFFLAV), 69–90 (WMMQNLHAIGASMFFICIYIHI), 105–125 (WMSGITLLITLMATAFFGYVL), and 170–190 (FFALHFILPFAIISLSSLHVI). The heme b site is built by His-75 and His-89. The heme b site is built by His-174 and His-188. His-193 contacts a ubiquinone. A run of 4 helical transmembrane segments spans residues 218-238 (YKDFLLLTLMVLSLFIIVSFF), 280-300 (LGGALALVMSIMILFTIPFTH), 312-332 (LYQLMFWTLVSTFITITWAAT), and 339-358 (FITISQVTSTLYFTFFISIP).

This sequence belongs to the cytochrome b family. In terms of assembly, the cytochrome bc1 complex contains 3 respiratory subunits (MT-CYB, CYC1 and UQCRFS1), 2 core proteins (UQCRC1 and UQCRC2) and probably 6 low-molecular weight proteins. Requires heme b as cofactor.

Its subcellular location is the mitochondrion inner membrane. In terms of biological role, component of the ubiquinol-cytochrome c reductase complex (complex III or cytochrome b-c1 complex) that is part of the mitochondrial respiratory chain. The b-c1 complex mediates electron transfer from ubiquinol to cytochrome c. Contributes to the generation of a proton gradient across the mitochondrial membrane that is then used for ATP synthesis. The chain is Cytochrome b (MT-CYB) from Malayopython reticulatus (Reticulate python).